The chain runs to 441 residues: 4-alpha-glucanotransferase (441 aa).

Ca(2+) is bound by residues aspartate 13, asparagine 15, aspartate 17, valine 19, and aspartate 21. The active-site Nucleophile is aspartate 186. The active-site Proton donor is glutamate 216.

This sequence belongs to the glycosyl hydrolase 13 family. Monomer. Requires Ca(2+) as cofactor.

The protein localises to the cytoplasm. It catalyses the reaction Transfers a segment of a (1-&gt;4)-alpha-D-glucan to a new position in an acceptor, which may be glucose or a (1-&gt;4)-alpha-D-glucan.. The sequence is that of 4-alpha-glucanotransferase (mgtA) from Thermotoga maritima (strain ATCC 43589 / DSM 3109 / JCM 10099 / NBRC 100826 / MSB8).